A 319-amino-acid polypeptide reads, in one-letter code: ATP-dependent 6-phosphofructokinase (319 aa).

Gly11 serves as a coordination point for ATP. 21 to 25 lines the ADP pocket; the sequence is RAVVR. Residues 72-73 and 102-105 contribute to the ATP site; these read RC and GDGS. Asp103 contacts Mg(2+). Residue 125 to 127 coordinates substrate; the sequence is TID. Residue Asp127 is the Proton acceptor of the active site. ADP is bound at residue Arg154. Residues Arg162 and 169–171 each bind substrate; that span reads MGR. Residues 185-187, Arg211, and 213-215 each bind ADP; these read GAE and KKH. Substrate is bound by residues Glu222, Arg243, and 249–252; that span reads HIQR.

It belongs to the phosphofructokinase type A (PFKA) family. ATP-dependent PFK group I subfamily. Prokaryotic clade 'B1' sub-subfamily. Homotetramer. Component of a possible RNA degradosome complex composed of rny, rnjA, rnjB, pnp, pfkA and eno (although rnjA and rnjB's presence is unclear). Specifically interacts with RNase Y (rny, PubMed:21803996) and enolase (eno, PubMed:22198292). Interacts with BrxC. The cofactor is Mg(2+).

It localises to the cytoplasm. The catalysed reaction is beta-D-fructose 6-phosphate + ATP = beta-D-fructose 1,6-bisphosphate + ADP + H(+). The protein operates within carbohydrate degradation; glycolysis; D-glyceraldehyde 3-phosphate and glycerone phosphate from D-glucose: step 3/4. With respect to regulation, allosterically activated by ADP and other diphosphonucleosides, and allosterically inhibited by phosphoenolpyruvate. Its function is as follows. Catalyzes the phosphorylation of D-fructose 6-phosphate to fructose 1,6-bisphosphate by ATP, the first committing step of glycolysis. The chain is ATP-dependent 6-phosphofructokinase from Bacillus subtilis (strain 168).